The following is a 257-amino-acid chain: MVSWMICRLVVLVFGMLCPAYASYKAVKTKNIREYVRWMMYWIVFALFMAAEIVTDIFISWFPFYYEIKMAFVLWLLSPYTKGASLLYRKFVHPSLSRHEKEIDAYIVQAKERSYETVLSFGKRGLNIAASAAVQAATKSQGALAGRLRSFSMQDLRSISDAPAPAYHDPLYLEDQVSHRRPPIGYRAGGLQDSDTEDECWSDTEAVPRAPARPREKPLIRSQSLRVVKRKPPVREGTSRSLKVRTRKKTVPSDVDS.

2 consecutive transmembrane segments (helical) span residues 1-21 (MVSW…CPAY) and 42-62 (WIVF…ISWF). Ser-152 and Ser-194 each carry phosphoserine. Positions 183 to 257 (PIGYRAGGLQ…KKTVPSDVDS (75 aa)) are disordered. Position 196 is a phosphothreonine (Thr-196). Ser-202 bears the Phosphoserine mark. Residue Thr-250 is modified to Phosphothreonine. Ser-253 bears the Phosphoserine mark.

Belongs to the DP1 family. In terms of tissue distribution, expressed in circumvallate papillae and testis.

It localises to the endoplasmic reticulum membrane. Microtubule-binding protein required to ensure proper cell division and nuclear envelope reassembly by sequestering the endoplasmic reticulum away from chromosomes during mitosis. Probably acts by clearing the endoplasmic reticulum membrane from metaphase chromosomes. The polypeptide is Receptor expression-enhancing protein 4 (REEP4) (Homo sapiens (Human)).